Consider the following 375-residue polypeptide: Erythronate-4-phosphate dehydrogenase (375 aa).

S49 contributes to the substrate binding site. 2 residues coordinate NAD(+): D150 and T178. R211 is a catalytic residue. D231 contributes to the NAD(+) binding site. E236 is a catalytic residue. The Proton donor role is filled by H253. NAD(+) is bound at residue G256.

Belongs to the D-isomer specific 2-hydroxyacid dehydrogenase family. PdxB subfamily. In terms of assembly, homodimer.

The protein localises to the cytoplasm. It carries out the reaction 4-phospho-D-erythronate + NAD(+) = (R)-3-hydroxy-2-oxo-4-phosphooxybutanoate + NADH + H(+). It participates in cofactor biosynthesis; pyridoxine 5'-phosphate biosynthesis; pyridoxine 5'-phosphate from D-erythrose 4-phosphate: step 2/5. Functionally, catalyzes the oxidation of erythronate-4-phosphate to 3-hydroxy-2-oxo-4-phosphonooxybutanoate. The polypeptide is Erythronate-4-phosphate dehydrogenase (Hydrogenovibrio crunogenus (strain DSM 25203 / XCL-2) (Thiomicrospira crunogena)).